The sequence spans 373 residues: MSTVTKTITVLPGDHVGTEICNEAIKVLEAIEQATPYQKIHFEFKHHLIGGAAIDSTGVPLPDDSLAAAKSSDAVLLGAVGGPKWGTGAVRPEQGLLKIRKELNLYANLRPCNFASDALLELSPLKSEIVKGTNFTVVRELVGGIYFGERQEQEESADGESAWDTEKYSVAEVTRITRMAAFMALQHNPPLPIWSLDKANVLASSRLWRKTVDKVMKEEFPQLTIQHQLIDSAAMILVQSPTKLNGIVITSNMFGDIISDEASVIPGSLGLLPSASLASLPDTNSAFGLYEPCHGSAPDLPENKVNPIATILSVAMMLRLSLDSLKEAEALEEAVRQVLDSGVRTADLRGTNSTKEVGEAVVAAVTKILKDAA.

82 to 93 (GPKWGTGAVRPE) contacts NAD(+). 4 residues coordinate substrate: Arg-100, Arg-110, Arg-139, and Asp-231. Positions 231 and 260 each coordinate Mg(2+). 295 to 306 (GSAPDLPENKVN) contacts NAD(+).

It belongs to the isocitrate and isopropylmalate dehydrogenases family. As to quaternary structure, homodimer. Mg(2+) is required as a cofactor. Mn(2+) serves as cofactor.

It is found in the cytoplasm. The enzyme catalyses (2R,3S)-3-isopropylmalate + NAD(+) = 4-methyl-2-oxopentanoate + CO2 + NADH. The protein operates within amino-acid biosynthesis; L-leucine biosynthesis; L-leucine from 3-methyl-2-oxobutanoate: step 3/4. In terms of biological role, catalyzes the oxidation of 3-carboxy-2-hydroxy-4-methylpentanoate (3-isopropylmalate) to 3-carboxy-4-methyl-2-oxopentanoate. The product decarboxylates to 4-methyl-2 oxopentanoate. This chain is 3-isopropylmalate dehydrogenase (LEU2), found in Scheffersomyces stipitis (strain ATCC 58785 / CBS 6054 / NBRC 10063 / NRRL Y-11545) (Yeast).